A 526-amino-acid chain; its full sequence is Tyrosine 2,3-aminomutase (526 aa).

Residue Tyr41 is the Proton donor/acceptor of the active site. His71 contacts substrate. A cross-link (5-imidazolinone (Ala-Gly)) is located at residues 130–132; that stretch reads ASG. Ser131 is modified (2,3-didehydroalanine (Ser)). Residues Asn183 and Arg288 each coordinate substrate.

This sequence belongs to the TAL/TAM family. Homotetramer; dimer of dimers. Contains an active site 4-methylidene-imidazol-5-one (MIO), which is formed autocatalytically by cyclization and dehydration of residues Ala-Ser-Gly.

It carries out the reaction L-tyrosine = 3-amino-3-(4-hydroxyphenyl)propanoate. It catalyses the reaction L-tyrosine = (E)-4-coumarate + NH4(+). Its function is as follows. Has aminomutase and, to a much lesser extent, ammonia-lyase activity. Primarily, catalyzes the rearrangement of L-tyrosine to S-beta-tyrosine, which is probably incorporated into secondary metabolite myxovalargin. The aminomutase activity exclusively produces S-beta-tyrosine. The protein is Tyrosine 2,3-aminomutase of Myxococcus sp. (strain Mx-B0).